Here is a 513-residue protein sequence, read N- to C-terminus: Solute carrier family 2, facilitated glucose transporter member 7 (513 aa).

Residues 1–21 (MEDKEIGTPLPLPHSEARLQP) lie on the Cytoplasmic side of the membrane. Residues 22 to 42 (TLVLTTLSAAFGSVFQYGYNI) traverse the membrane as a helical segment. Residues 43-78 (AVINTPHKVFKSFYNDTHFERHGTFMDESTLLLLWS) lie on the Extracellular side of the membrane. N-linked (GlcNAc...) asparagine glycosylation is present at asparagine 57. A helical transmembrane segment spans residues 79-99 (CTVSMFPLGGLLGSLVVGLMV). At 100-107 (NKWGRKGT) the chain is on the cytoplasmic side. The helical transmembrane segment at 108 to 128 (LLINNVFAITSAVLMGVSKVA) threads the bilayer. Residues 129–138 (RAFELIILSR) lie on the Extracellular side of the membrane. The chain crosses the membrane as a helical span at residues 139–159 (VLVGICAGIAYSTLPMYLGEL). At 160–172 (APQNLRGALGTMT) the chain is on the cytoplasmic side. The helical transmembrane segment at 173-193 (EVFVIIGVLLAQIFSLQAILG) threads the bilayer. The Extracellular portion of the chain corresponds to 194-198 (NATGW). Residues 199-219 (PILLALTGVPAVIQLLSLPFF) form a helical membrane-spanning segment. At 220-282 (PESPRYTLIE…LNLFTFRPLR (63 aa)) the chain is on the cytoplasmic side. A helical transmembrane segment spans residues 283 to 303 (WQLISIVVLMAGQQLSGINAV). Residues 295 to 296 (QQ) and asparagine 301 contribute to the D-glucose site. Topologically, residues 304–322 (NYYADVIYTSAGVDPTQSQ) are extracellular. A helical transmembrane segment spans residues 323–343 (YVTLGSGVINLVMTLVSAVII). A D-glucose-binding site is contributed by asparagine 332. The Cytoplasmic portion of the chain corresponds to 344–351 (ERLGRRIL). A helical transmembrane segment spans residues 352–372 (LLSGYAICCSACLVLTVALLL). The Extracellular portion of the chain corresponds to 373-380 (QSTAPELS). The chain crosses the membrane as a helical span at residues 381–401 (YLSIVCVFSYIVGHSIGPSPV). The Cytoplasmic segment spans residues 402–416 (PSVVRTEIVLQSSRT). Residues 417–437 (AAFTVDGAVHWLTNFIVGLTF) form a helical membrane-spanning segment. Residues 438 to 446 (PSIQVAIGA) are Extracellular-facing. The chain crosses the membrane as a helical span at residues 447–467 (YSFLVFAGVCILTAAYIYVVI). Over 468 to 513 (PETKGRTFVEINCAFAKRNGVEFPEEKEVATAKPHTPSLPTKETAF) the chain is Cytoplasmic. Residues 494–513 (KEVATAKPHTPSLPTKETAF) form a disordered region.

This sequence belongs to the major facilitator superfamily. Sugar transporter (TC 2.A.1.1) family. Glucose transporter subfamily.

Its subcellular location is the cell membrane. It localises to the apical cell membrane. The catalysed reaction is D-glucose(out) = D-glucose(in). It catalyses the reaction D-fructose(out) = D-fructose(in). Functionally, probable sugar transporter. Even if its physiological substrate is subject to discussion, it is able to transport glucose and fructose. Does not transport galactose, 2-deoxy-d-glucose and xylose. The sequence is that of Solute carrier family 2, facilitated glucose transporter member 7 from Mus musculus (Mouse).